A 416-amino-acid chain; its full sequence is Chorismate synthase (416 aa).

Arginine 40 and arginine 46 together coordinate NADP(+). FMN-binding positions include 135 to 137 (RAS), 256 to 257 (QA), glycine 300, 315 to 319 (KPIAT), and arginine 341.

The protein belongs to the chorismate synthase family. As to quaternary structure, homotetramer. Requires FMNH2 as cofactor.

It catalyses the reaction 5-O-(1-carboxyvinyl)-3-phosphoshikimate = chorismate + phosphate. Its pathway is metabolic intermediate biosynthesis; chorismate biosynthesis; chorismate from D-erythrose 4-phosphate and phosphoenolpyruvate: step 7/7. Functionally, catalyzes the anti-1,4-elimination of the C-3 phosphate and the C-6 proR hydrogen from 5-enolpyruvylshikimate-3-phosphate (EPSP) to yield chorismate, which is the branch point compound that serves as the starting substrate for the three terminal pathways of aromatic amino acid biosynthesis. This reaction introduces a second double bond into the aromatic ring system. This chain is Chorismate synthase, found in Kocuria rhizophila (strain ATCC 9341 / DSM 348 / NBRC 103217 / DC2201).